Consider the following 503-residue polypeptide: Adenosine deaminase 2-A (503 aa).

A signal peptide spans 1 to 24; sequence MHVLFLGDLMWIYLLLLCCASCNG. Residues His105 and His107 each contribute to the Zn(2+) site. Asp108 serves as a coordination point for substrate. The N-linked (GlcNAc...) asparagine glycan is linked to Asn120. The cysteines at positions 130 and 152 are disulfide-linked. Asn167 and Asn178 each carry an N-linked (GlcNAc...) asparagine glycan. Substrate contacts are provided by residues 197–204 and His286; that span reads WERFEQVF. Asn290 is a glycosylation site (N-linked (GlcNAc...) asparagine). Gly319 lines the substrate pocket. Residue His349 coordinates Zn(2+). The Proton donor role is filled by Glu352. Residue Asn371 is glycosylated (N-linked (GlcNAc...) asparagine). The active-site Proton acceptor is His377. A Zn(2+)-binding site is contributed by Asp434. Substrate is bound at residue Asp435.

The protein belongs to the metallo-dependent hydrolases superfamily. Adenosine and AMP deaminases family. ADGF subfamily. The cofactor is Zn(2+).

Its subcellular location is the secreted. The catalysed reaction is adenosine + H2O + H(+) = inosine + NH4(+). Adenosine deaminase that may contribute to the degradation of extracellular adenosine, a signaling molecule that controls a variety of cellular responses. May play a role in the regulation of cell proliferation. This Danio rerio (Zebrafish) protein is Adenosine deaminase 2-A.